The chain runs to 992 residues: UPF0182 protein BCG_3215c (992 aa).

A run of 7 helical transmembrane segments spans residues Ile18–Asp38, Ile63–Leu83, Leu113–Tyr133, Leu175–Ile195, Val210–Asp230, Lys259–Leu279, and Ile287–Val307. The segment at Pro906–Pro938 is disordered. Positions Pro912 to Pro938 are enriched in pro residues.

Belongs to the UPF0182 family.

The protein localises to the cell membrane. This chain is UPF0182 protein BCG_3215c, found in Mycobacterium bovis (strain BCG / Pasteur 1173P2).